The chain runs to 246 residues: 3'(2'),5'-bisphosphate nucleotidase CysQ (246 aa).

Mg(2+) is bound by residues E64, D83, L85, D86, and D205. E64 provides a ligand contact to substrate. Substrate-binding positions include 85 to 88 and D205; that span reads LDGT.

Belongs to the inositol monophosphatase superfamily. CysQ family. Mg(2+) is required as a cofactor.

The protein resides in the cell inner membrane. It catalyses the reaction adenosine 3',5'-bisphosphate + H2O = AMP + phosphate. Converts adenosine-3',5'-bisphosphate (PAP) to AMP. The polypeptide is 3'(2'),5'-bisphosphate nucleotidase CysQ (Escherichia coli O157:H7).